Here is a 371-residue protein sequence, read N- to C-terminus: Collectin-46 (371 aa).

Positions 1–20 (MLLLPLSVLLLLTQPWRSLG) are cleaved as a signal peptide. The disordered stretch occupies residues 43–215 (PEGGLPGRDG…ERGAKGESGL (173 aa)). Positions 46 to 216 (GLPGRDGQDG…RGAKGESGLA (171 aa)) constitute a Collagen-like domain. The segment covering 51–65 (DGQDGREGPQGEKGD) has biased composition (basic and acidic residues). Residue Asn-90 is glycosylated (N-linked (GlcNAc...) asparagine). Low complexity predominate over residues 113–128 (PAGREGPSGKQGSMGP). Residues 139–148 (GPKGGMGAPG) show a composition bias toward gly residues. Residues 170 to 191 (APGSAGVAGPAGAIGPQGPSGA) are compositionally biased toward low complexity. Positions 198-210 (KGDRGDPGERGAK) are enriched in basic and acidic residues. The short motif at 201–203 (RGD) is the Cell attachment site element. Positions 273–371 (QLCREAKGQL…SEPLLVICEF (99 aa)) constitute a C-type lectin domain. 2 disulfides stabilise this stretch: Cys-275–Cys-369 and Cys-347–Cys-361.

This sequence belongs to the SFTPD family. As to quaternary structure, oligomeric complex of 4 set of homotrimers. Post-translationally, hydroxylated. In terms of tissue distribution, highly expressed in thymus and liver.

It is found in the secreted. This chain is Collectin-46 (CL46), found in Bos taurus (Bovine).